The primary structure comprises 284 residues: uncharacterized protein (284 aa).

The first 23 residues, 1 to 23 (MKRGCAIAVMICGLITSVSAASA), serve as a signal peptide directing secretion.

The protein belongs to the surface antigen msp4 family.

This is an uncharacterized protein from Brucella melitensis biotype 1 (strain ATCC 23456 / CCUG 17765 / NCTC 10094 / 16M).